Here is a 159-residue protein sequence, read N- to C-terminus: Serine-protein kinase RsbW (159 aa).

Belongs to the anti-sigma-factor family.

The catalysed reaction is L-seryl-[protein] + ATP = O-phospho-L-seryl-[protein] + ADP + H(+). The enzyme catalyses L-threonyl-[protein] + ATP = O-phospho-L-threonyl-[protein] + ADP + H(+). Functionally, negative regulator of sigma-B activity. Phosphorylates and inactivates its specific antagonist protein, RsbV. Upon phosphorylation of RsbV, RsbW is released and binds to sigma-B, thereby blocking its ability to form an RNA polymerase holoenzyme (E-sigma-B). In Staphylococcus aureus (strain Newman), this protein is Serine-protein kinase RsbW.